Reading from the N-terminus, the 178-residue chain is MSRIGKRIIEIPSSVQASVEGSKLLFKNSKEKHELETHNRVKITLENNQLSFQPVGEDAQSRAYWGTYGALANNIVIGLSTGFSKTLEVNGVGYKVALGNKTLDLSLGFSHPVKYPIPAGIEMVVEKNTITIKGSDKQKVGQVAAEIRSFRPPEPYKGKGVKYSNEVIIRKAGKTAKK.

This sequence belongs to the universal ribosomal protein uL6 family. In terms of assembly, part of the 50S ribosomal subunit.

Functionally, this protein binds to the 23S rRNA, and is important in its secondary structure. It is located near the subunit interface in the base of the L7/L12 stalk, and near the tRNA binding site of the peptidyltransferase center. The sequence is that of Large ribosomal subunit protein uL6 from Helicobacter pylori (strain P12).